We begin with the raw amino-acid sequence, 294 residues long: Shikimate dehydrogenase (NADP(+)) (294 aa).

Shikimate contacts are provided by residues 14–16 (SKS) and threonine 61. The active-site Proton acceptor is the lysine 65. Residue aspartate 77 coordinates NADP(+). The shikimate site is built by asparagine 86 and aspartate 102. NADP(+) contacts are provided by residues 140-144 (GSGGA) and leucine 235. Position 237 (tyrosine 237) interacts with shikimate. Position 259 (glycine 259) interacts with NADP(+).

This sequence belongs to the shikimate dehydrogenase family. Homodimer.

The enzyme catalyses shikimate + NADP(+) = 3-dehydroshikimate + NADPH + H(+). It participates in metabolic intermediate biosynthesis; chorismate biosynthesis; chorismate from D-erythrose 4-phosphate and phosphoenolpyruvate: step 4/7. Its function is as follows. Involved in the biosynthesis of the chorismate, which leads to the biosynthesis of aromatic amino acids. Catalyzes the reversible NADPH linked reduction of 3-dehydroshikimate (DHSA) to yield shikimate (SA). This Blochmanniella floridana protein is Shikimate dehydrogenase (NADP(+)).